Reading from the N-terminus, the 255-residue chain is uncharacterized protein (255 aa).

An N-terminal signal peptide occupies residues 1 to 23; that stretch reads MKRLNKLVLYISFLILVISFTAG. Residue Cys-24 is the site of N-palmitoyl cysteine attachment. A lipid anchor (S-diacylglycerol cysteine) is attached at Cys-24.

This sequence belongs to the staphylococcal tandem lipoprotein family.

The protein resides in the cell membrane. This is an uncharacterized protein from Staphylococcus aureus (strain NCTC 8325 / PS 47).